A 308-amino-acid polypeptide reads, in one-letter code: Aspartate carbamoyltransferase catalytic subunit (308 aa).

Arg59 and Thr60 together coordinate carbamoyl phosphate. Lys87 provides a ligand contact to L-aspartate. Residues Arg109, His137, and Gln140 each contribute to the carbamoyl phosphate site. L-aspartate contacts are provided by Arg170 and Arg224. Residues Gly265 and Pro266 each coordinate carbamoyl phosphate.

Belongs to the aspartate/ornithine carbamoyltransferase superfamily. ATCase family. In terms of assembly, heterododecamer (2C3:3R2) of six catalytic PyrB chains organized as two trimers (C3), and six regulatory PyrI chains organized as three dimers (R2).

The catalysed reaction is carbamoyl phosphate + L-aspartate = N-carbamoyl-L-aspartate + phosphate + H(+). It participates in pyrimidine metabolism; UMP biosynthesis via de novo pathway; (S)-dihydroorotate from bicarbonate: step 2/3. Catalyzes the condensation of carbamoyl phosphate and aspartate to form carbamoyl aspartate and inorganic phosphate, the committed step in the de novo pyrimidine nucleotide biosynthesis pathway. This chain is Aspartate carbamoyltransferase catalytic subunit, found in Flavobacterium johnsoniae (strain ATCC 17061 / DSM 2064 / JCM 8514 / BCRC 14874 / CCUG 350202 / NBRC 14942 / NCIMB 11054 / UW101) (Cytophaga johnsonae).